The chain runs to 549 residues: Hydroxylamine reductase (549 aa).

Cys-3, Cys-6, Cys-15, and Cys-21 together coordinate [4Fe-4S] cluster. Positions 248, 272, 316, 403, 431, 456, 490, and 492 each coordinate hybrid [4Fe-2O-2S] cluster. Cys-403 carries the cysteine persulfide modification.

It belongs to the HCP family. [4Fe-4S] cluster is required as a cofactor. It depends on hybrid [4Fe-2O-2S] cluster as a cofactor.

Its subcellular location is the cytoplasm. It catalyses the reaction A + NH4(+) + H2O = hydroxylamine + AH2 + H(+). Catalyzes the reduction of hydroxylamine to form NH(3) and H(2)O. The protein is Hydroxylamine reductase of Rhodospirillum rubrum (strain ATCC 11170 / ATH 1.1.1 / DSM 467 / LMG 4362 / NCIMB 8255 / S1).